Consider the following 274-residue polypeptide: Dermonecrotic toxin SdSicTox-betaIIB1bi (274 aa).

Histidine 5 is an active-site residue. Positions 25 and 27 each coordinate Mg(2+). The active-site Nucleophile is histidine 41. Intrachain disulfides connect cysteine 45/cysteine 51 and cysteine 47/cysteine 190. Aspartate 85 contributes to the Mg(2+) binding site.

The protein belongs to the arthropod phospholipase D family. Class II subfamily. Requires Mg(2+) as cofactor. As to expression, expressed by the venom gland.

The protein localises to the secreted. It carries out the reaction an N-(acyl)-sphingosylphosphocholine = an N-(acyl)-sphingosyl-1,3-cyclic phosphate + choline. The catalysed reaction is an N-(acyl)-sphingosylphosphoethanolamine = an N-(acyl)-sphingosyl-1,3-cyclic phosphate + ethanolamine. The enzyme catalyses a 1-acyl-sn-glycero-3-phosphocholine = a 1-acyl-sn-glycero-2,3-cyclic phosphate + choline. It catalyses the reaction a 1-acyl-sn-glycero-3-phosphoethanolamine = a 1-acyl-sn-glycero-2,3-cyclic phosphate + ethanolamine. In terms of biological role, dermonecrotic toxins cleave the phosphodiester linkage between the phosphate and headgroup of certain phospholipids (sphingolipid and lysolipid substrates), forming an alcohol (often choline) and a cyclic phosphate. This toxin acts on sphingomyelin (SM). It may also act on ceramide phosphoethanolamine (CPE), lysophosphatidylcholine (LPC) and lysophosphatidylethanolamine (LPE), but not on lysophosphatidylserine (LPS), and lysophosphatidylglycerol (LPG). It acts by transphosphatidylation, releasing exclusively cyclic phosphate products as second products. Induces dermonecrosis, hemolysis, increased vascular permeability, edema, inflammatory response, and platelet aggregation. The polypeptide is Dermonecrotic toxin SdSicTox-betaIIB1bi (Sicarius cf. damarensis (strain GJB-2008) (Six-eyed sand spider)).